The sequence spans 156 residues: MKLQLVAVGTKMPDWVQTGFIEYLRRFPKDMPFELAEIPAGKRGKNADIKRILEKEGELMLAAVGKNNRIVTLDIPGTPWETPQLAQQLERWKQDGRDVSLLIGGPEGLAPACKAAAEQSWSLSPLTLPHPLVRVLVAESLYRAWSITTNHPYHRE.

Residues Leu-73, Gly-104, and 123-128 (LSPLTL) contribute to the S-adenosyl-L-methionine site.

The protein belongs to the RNA methyltransferase RlmH family. As to quaternary structure, homodimer.

It is found in the cytoplasm. The catalysed reaction is pseudouridine(1915) in 23S rRNA + S-adenosyl-L-methionine = N(3)-methylpseudouridine(1915) in 23S rRNA + S-adenosyl-L-homocysteine + H(+). In terms of biological role, specifically methylates the pseudouridine at position 1915 (m3Psi1915) in 23S rRNA. The chain is Ribosomal RNA large subunit methyltransferase H from Yersinia pseudotuberculosis serotype O:1b (strain IP 31758).